The following is a 524-amino-acid chain: Dihydromonacolin L monooxygenase mokC (524 aa).

The Cytoplasmic portion of the chain corresponds to 1–25 (MTVPTDTVSRRLQSLAWSDIKQHAP). Residues 26–47 (WLPSSRTLVSGFLCLILLQILY) form a helical; Signal-anchor for type II membrane protein membrane-spanning segment. The Lumenal portion of the chain corresponds to 48 to 524 (SRGRKSDLRV…LMMRRRDEDL (477 aa)). Asparagine 396 and asparagine 401 each carry an N-linked (GlcNAc...) asparagine glycan. Cysteine 467 contacts heme.

This sequence belongs to the cytochrome P450 family. Heme is required as a cofactor.

The protein resides in the endoplasmic reticulum membrane. It catalyses the reaction dihydromonacolin L carboxylate + reduced [NADPH--hemoprotein reductase] + O2 = monacolin L carboxylate + oxidized [NADPH--hemoprotein reductase] + 2 H2O + H(+). The enzyme catalyses monacolin L carboxylate + reduced [NADPH--hemoprotein reductase] + O2 = monacolin J carboxylate + oxidized [NADPH--hemoprotein reductase] + H2O + H(+). It functions in the pathway polyketide biosynthesis; lovastatin biosynthesis. Cytochrome P450 monooxygenase; part of the gene cluster that mediates the biosynthesis of monakolin K, also known as lovastatin, and which acts as a potent competitive inhibitor of HMG-CoA reductase. Monakolin K biosynthesis is performed in two stages. The first stage is catalyzed by the nonaketide synthase mokA, which belongs to type I polyketide synthases and catalyzes the iterative nine-step formation of the polyketide. This PKS stage is completed by the action of dehydrogenase mokE, which catalyzes the NADPH-dependent reduction of the unsaturated tetra-, penta- and heptaketide intermediates that arise during the mokA-mediated biosynthesis of the nonaketide chain and leads to dihydromonacolin L. Covalently bound dihydromonacolin L is released from mokA by the mokD esterase. Conversion of dihydromonacolin L into monacolin L and then monacolin J is subsequently performed with the participation of molecular oxygen and P450 monoogygenase mokC. Finally, mokF performs the conversion of monacoline J to monacoline K through the addition of the side-chain diketide moiety (2R)-2-methylbutanoate produced by the diketide synthase mokB. This is Dihydromonacolin L monooxygenase mokC from Monascus pilosus (Red mold).